Here is a 723-residue protein sequence, read N- to C-terminus: Fatty acid oxidation complex subunit alpha (723 aa).

The interval 1 to 189 (MIYQADTLQV…KIGLLDAVVE (189 aa)) is enoyl-CoA hydratase/isomerase. Asp-296 provides a ligand contact to substrate. The 3-hydroxyacyl-CoA dehydrogenase stretch occupies residues 311 to 723 (SKDTERAAVL…FYGAQQQGSI (413 aa)). Residues Met-325, Asp-344, 401–403 (VVE), Lys-408, and Ser-430 each bind NAD(+). The active-site For 3-hydroxyacyl-CoA dehydrogenase activity is His-451. Asn-454 provides a ligand contact to NAD(+). 2 residues coordinate substrate: Asn-501 and Tyr-661.

In the N-terminal section; belongs to the enoyl-CoA hydratase/isomerase family. It in the C-terminal section; belongs to the 3-hydroxyacyl-CoA dehydrogenase family. In terms of assembly, heterotetramer of two alpha chains (FadB) and two beta chains (FadA).

It catalyses the reaction a (3S)-3-hydroxyacyl-CoA + NAD(+) = a 3-oxoacyl-CoA + NADH + H(+). It carries out the reaction a (3S)-3-hydroxyacyl-CoA = a (2E)-enoyl-CoA + H2O. The catalysed reaction is a 4-saturated-(3S)-3-hydroxyacyl-CoA = a (3E)-enoyl-CoA + H2O. The enzyme catalyses (3S)-3-hydroxybutanoyl-CoA = (3R)-3-hydroxybutanoyl-CoA. It catalyses the reaction a (3Z)-enoyl-CoA = a 4-saturated (2E)-enoyl-CoA. It carries out the reaction a (3E)-enoyl-CoA = a 4-saturated (2E)-enoyl-CoA. Its pathway is lipid metabolism; fatty acid beta-oxidation. Involved in the aerobic and anaerobic degradation of long-chain fatty acids via beta-oxidation cycle. Catalyzes the formation of 3-oxoacyl-CoA from enoyl-CoA via L-3-hydroxyacyl-CoA. It can also use D-3-hydroxyacyl-CoA and cis-3-enoyl-CoA as substrate. This chain is Fatty acid oxidation complex subunit alpha, found in Vibrio parahaemolyticus serotype O3:K6 (strain RIMD 2210633).